Reading from the N-terminus, the 269-residue chain is Tryptophan synthase alpha chain (269 aa).

Active-site proton acceptor residues include glutamate 50 and aspartate 61.

It belongs to the TrpA family. Tetramer of two alpha and two beta chains.

It carries out the reaction (1S,2R)-1-C-(indol-3-yl)glycerol 3-phosphate + L-serine = D-glyceraldehyde 3-phosphate + L-tryptophan + H2O. Its pathway is amino-acid biosynthesis; L-tryptophan biosynthesis; L-tryptophan from chorismate: step 5/5. Its function is as follows. The alpha subunit is responsible for the aldol cleavage of indoleglycerol phosphate to indole and glyceraldehyde 3-phosphate. This is Tryptophan synthase alpha chain from Francisella tularensis subsp. holarctica (strain FTNF002-00 / FTA).